We begin with the raw amino-acid sequence, 202 residues long: Small ribosomal subunit protein uS4 (202 aa).

The S4 RNA-binding domain maps to 94–157 (SRLDSLVYRA…LEMPLIKNTL (64 aa)).

Belongs to the universal ribosomal protein uS4 family. As to quaternary structure, part of the 30S ribosomal subunit. Contacts protein S5. The interaction surface between S4 and S5 is involved in control of translational fidelity.

In terms of biological role, one of the primary rRNA binding proteins, it binds directly to 16S rRNA where it nucleates assembly of the body of the 30S subunit. Functionally, with S5 and S12 plays an important role in translational accuracy. The chain is Small ribosomal subunit protein uS4 from Ureaplasma urealyticum serovar 10 (strain ATCC 33699 / Western).